The primary structure comprises 347 residues: DNA primase small subunit PriS (347 aa).

Catalysis depends on residues D95 and D97. Zn(2+) is bound by residues C106, H108, C114, and C117. The Zinc knuckle motif signature appears at 106–117 (CNHEPGTVCPIC). The active site involves D280.

It belongs to the eukaryotic-type primase small subunit family. Heterodimer of a small subunit (PriS) and a large subunit (PriL). Both participate in formation of the active center, but the ATP-binding site is exclusively located on the small subunit. Mg(2+) is required as a cofactor. Mn(2+) serves as cofactor.

Functionally, catalytic subunit of DNA primase, an RNA polymerase that catalyzes the synthesis of short RNA molecules used as primers for DNA polymerase during DNA replication. The small subunit contains the primase catalytic core and has DNA synthesis activity on its own. Binding to the large subunit stabilizes and modulates the activity, increasing the rate of DNA synthesis while decreasing the length of the DNA fragments, and conferring RNA synthesis capability. The DNA polymerase activity may enable DNA primase to also catalyze primer extension after primer synthesis. May also play a role in DNA repair. In Pyrococcus furiosus (strain ATCC 43587 / DSM 3638 / JCM 8422 / Vc1), this protein is DNA primase small subunit PriS.